The chain runs to 418 residues: MNNPQTGQSTGLLGNRWFYLVLAVLLMCMISGVQYSWTLYANPVKDNLGVSLAAVQTAFTLSQVIQAGSQPGGGYFVDKFGPRIPLMFGGAMVLAGWTFMGMVDSVPALYALYTLAGAGVGIVYGIAMNTANRWFPDKRGLASGFTAAGYGLGVLPFLPLISSVLKVEGVGAAFMYTGLIMGILIILIAFVIRFPGQQGAKKQIVVTDKDFNSGEMLRTPQFWVLWTAFFSVNFGGLLLVANSVPYGRSLGLAAGVLTIGVSIQNLFNGGCRPFWGFVSDKIGRYKTMSVVFGINAVVLALFPTIAALGDVAFIAMLAIAFFTWGGSYALFPSTNSDIFGTAYSARNYGFFWAAKATASIFGGGLGAAIATNFGWNTAFLITAITSFIAFALATFVIPRMGRPVKKMVKLSPEEKAVH.

12 consecutive transmembrane segments (helical) span residues 17-37 (WFYL…QYSW), 48-68 (LGVS…IQAG), 84-104 (IPLM…GMVD), 108-128 (ALYA…GIAM), 141-161 (LASG…LPLI), 172-192 (AAFM…AFVI), 222-242 (FWVL…LVAN), 250-270 (LGLA…FNGG), 288-308 (MSVV…IAAL), 311-331 (VAFI…YALF), 350-370 (FFWA…AAIA), and 378-398 (AFLI…FVIP). Oxalate is bound at residue lysine 355.

The protein belongs to the major facilitator superfamily. OFA (TC 2.A.1.11) family. Monomer.

It localises to the cell inner membrane. In terms of biological role, anion transporter that carries out the exchange of divalent oxalate with monovalent formate, the product of oxalate decarboxylation, at the plasma membrane, and in doing so catalyzes the vectorial portion of a proton-motive metabolic cycle that drives ATP synthesis. The protein is Oxalate:formate antiporter (oxlT) of Oxalobacter formigenes.